The following is a 427-amino-acid chain: Adenylosuccinate synthetase (427 aa).

Residues 12-18 and 40-42 each bind GTP; these read GDEGKGK and GHT. The active-site Proton acceptor is Asp13. Residues Asp13 and Gly40 each coordinate Mg(2+). IMP is bound by residues 13–16, 38–41, Thr128, Arg142, Gln223, Thr238, and Arg302; these read DEGK and NAGH. His41 (proton donor) is an active-site residue. 298 to 304 lines the substrate pocket; the sequence is TTTGRAR. GTP-binding positions include Arg304, 330–332, and 412–414; these read KLD and AVG.

The protein belongs to the adenylosuccinate synthetase family. In terms of assembly, homodimer. The cofactor is Mg(2+).

The protein resides in the cytoplasm. It catalyses the reaction IMP + L-aspartate + GTP = N(6)-(1,2-dicarboxyethyl)-AMP + GDP + phosphate + 2 H(+). It participates in purine metabolism; AMP biosynthesis via de novo pathway; AMP from IMP: step 1/2. Functionally, plays an important role in the de novo pathway of purine nucleotide biosynthesis. Catalyzes the first committed step in the biosynthesis of AMP from IMP. The sequence is that of Adenylosuccinate synthetase from Desulfitobacterium hafniense (strain DSM 10664 / DCB-2).